Here is a 476-residue protein sequence, read N- to C-terminus: Aspartyl/glutamyl-tRNA(Asn/Gln) amidotransferase subunit B (476 aa).

The protein belongs to the GatB/GatE family. GatB subfamily. Heterotrimer of A, B and C subunits.

The catalysed reaction is L-glutamyl-tRNA(Gln) + L-glutamine + ATP + H2O = L-glutaminyl-tRNA(Gln) + L-glutamate + ADP + phosphate + H(+). It catalyses the reaction L-aspartyl-tRNA(Asn) + L-glutamine + ATP + H2O = L-asparaginyl-tRNA(Asn) + L-glutamate + ADP + phosphate + 2 H(+). Functionally, allows the formation of correctly charged Asn-tRNA(Asn) or Gln-tRNA(Gln) through the transamidation of misacylated Asp-tRNA(Asn) or Glu-tRNA(Gln) in organisms which lack either or both of asparaginyl-tRNA or glutaminyl-tRNA synthetases. The reaction takes place in the presence of glutamine and ATP through an activated phospho-Asp-tRNA(Asn) or phospho-Glu-tRNA(Gln). The polypeptide is Aspartyl/glutamyl-tRNA(Asn/Gln) amidotransferase subunit B (Clostridium botulinum (strain Kyoto / Type A2)).